The following is a 431-amino-acid chain: Tol-Pal system protein TolB (431 aa).

Positions methionine 1–alanine 26 are cleaved as a signal peptide. The tract at residues proline 411–glutamine 431 is disordered.

This sequence belongs to the TolB family. The Tol-Pal system is composed of five core proteins: the inner membrane proteins TolA, TolQ and TolR, the periplasmic protein TolB and the outer membrane protein Pal. They form a network linking the inner and outer membranes and the peptidoglycan layer.

The protein resides in the periplasm. In terms of biological role, part of the Tol-Pal system, which plays a role in outer membrane invagination during cell division and is important for maintaining outer membrane integrity. The chain is Tol-Pal system protein TolB from Burkholderia lata (strain ATCC 17760 / DSM 23089 / LMG 22485 / NCIMB 9086 / R18194 / 383).